An 887-amino-acid chain; its full sequence is Alanine--tRNA ligase (887 aa).

The Zn(2+) site is built by H579, H583, C681, and H685.

It belongs to the class-II aminoacyl-tRNA synthetase family. The cofactor is Zn(2+).

It localises to the cytoplasm. It carries out the reaction tRNA(Ala) + L-alanine + ATP = L-alanyl-tRNA(Ala) + AMP + diphosphate. Its function is as follows. Catalyzes the attachment of alanine to tRNA(Ala) in a two-step reaction: alanine is first activated by ATP to form Ala-AMP and then transferred to the acceptor end of tRNA(Ala). Also edits incorrectly charged Ser-tRNA(Ala) and Gly-tRNA(Ala) via its editing domain. The chain is Alanine--tRNA ligase from Flavobacterium psychrophilum (strain ATCC 49511 / DSM 21280 / CIP 103535 / JIP02/86).